Reading from the N-terminus, the 249-residue chain is tRNA pseudouridine synthase A (249 aa).

Residue Asp52 is the Nucleophile of the active site. Position 111 (Tyr111) interacts with substrate.

It belongs to the tRNA pseudouridine synthase TruA family. In terms of assembly, homodimer.

It catalyses the reaction uridine(38/39/40) in tRNA = pseudouridine(38/39/40) in tRNA. Formation of pseudouridine at positions 38, 39 and 40 in the anticodon stem and loop of transfer RNAs. In Maricaulis maris (strain MCS10) (Caulobacter maris), this protein is tRNA pseudouridine synthase A.